The chain runs to 237 residues: MRSFQRGALDLRPVVLTPGVSRYAEGSVQVEFGHTKVLVTCSTEERVPPHLMGKGSGWVTAEYGMLPRATHSRNQRESAKGKQTGRTMEIQRLIGRSLRAAVDLSTLGPRTLTLDCDVLQADGGTRTASITGAYVALVLALRSLQKAGTISKLPKLTPLAAVSVGIVKGEVRVDLDYDEDSTADVDLNLVATADGRMVELQGTAEHQLFDRKALDAMVDGGLAAIQKLTAAQAQVLG.

Phosphate is bound by residues arginine 86 and 124-126; that span reads GTR.

This sequence belongs to the RNase PH family. As to quaternary structure, homohexameric ring arranged as a trimer of dimers.

The enzyme catalyses tRNA(n+1) + phosphate = tRNA(n) + a ribonucleoside 5'-diphosphate. In terms of biological role, phosphorolytic 3'-5' exoribonuclease that plays an important role in tRNA 3'-end maturation. Removes nucleotide residues following the 3'-CCA terminus of tRNAs; can also add nucleotides to the ends of RNA molecules by using nucleoside diphosphates as substrates, but this may not be physiologically important. Probably plays a role in initiation of 16S rRNA degradation (leading to ribosome degradation) during starvation. This Myxococcus xanthus (strain DK1622) protein is Ribonuclease PH.